The primary structure comprises 132 residues: Small ribosomal subunit protein eS12 (132 aa).

The protein belongs to the eukaryotic ribosomal protein eS12 family.

The protein resides in the cytoplasm. In Xenopus laevis (African clawed frog), this protein is Small ribosomal subunit protein eS12 (rps12).